The primary structure comprises 570 residues: BRICHOS domain-containing protein C09F5.1 (570 aa).

Residues 1–288 are Cytoplasmic-facing; it reads MVVEQIEVIE…YTPELLRSLC (288 aa). Polar residues-rich tracts occupy residues 93 to 107 and 228 to 246; these read SGATNSSFLNTSGDS and TSTLNSRRFPPQSQTSLVS. 2 disordered regions span residues 93–116 and 218–248; these read SGATNSSFLNTSGDSRVSYPGADR and SSWDGDEKKMTSTLNSRRFPPQSQTSLVSRE. A helical transmembrane segment spans residues 289-309; the sequence is CILLLLLLLLFLMFIIFNAIF. Residues 310–570 are Extracellular-facing; sequence NRYAVSEFLL…RKSINNATLV (261 aa). The BRICHOS domain maps to 369–461; that stretch reads TAVDFNTGYV…IDDCEGAQWY (93 aa). An intrachain disulfide couples cysteine 395 to cysteine 455.

The protein resides in the membrane. The sequence is that of BRICHOS domain-containing protein C09F5.1 from Caenorhabditis elegans.